Reading from the N-terminus, the 927-residue chain is Disks large homolog 1 (927 aa).

The L27 domain occupies 4–64 (RKQDTQRALH…FYEVTLLDNP (61 aa)). Phosphothreonine is present on Thr115. Phosphoserine occurs at positions 122, 138, and 158. The interval 162–212 (PTEAVPPSSPTVPVIPVLPVPAENTVILPTIPQANPPPVLVNTDSLETSTY) is interaction with SH3 domains. Residues 224 to 546 (EITLERGNSG…QAVTIVAQYR (323 aa)) are required for interaction with MARCHF2. PDZ domains are found at residues 230-317 (GNSG…SEKI), 325-412 (GPKG…YMND), and 474-555 (TGLG…RFEA). At Ser232 the chain carries Phosphoserine. Tyr399 is modified (phosphotyrosine). Phosphoserine occurs at positions 568, 573, 575, 579, 598, 619, 707, 710, and 857. The SH3 domain occupies 581–651 (KRSLYVRALF…PSKRRVEKKE (71 aa)). In terms of domain architecture, Guanylate kinase-like spans 683 to 858 (RKFPFYKNKD…ISIFIKPKSM (176 aa)). Positions 691 to 719 (KDQSEQETSDADQHITSNASDSESSYRGQ) are disordered. Residues 704–717 (HITSNASDSESSYR) are compositionally biased toward polar residues.

Belongs to the MAGUK family. Homotetramer. Interacts (via guanylate kinase-like domain) with DLGAP1, DLGAP2, DLGAP3, DLGAP4 and MAP1A. Interacts (via guanylate kinase-like domain) with KIF13B. May interact with HTR2A. Interacts (via PDZ domains) with GRIA1. Interacts (via PDZ domains) with GRIN2A. Interacts (via PDZ domains) with KCND2 and KCND3. Interacts (via PDZ domains) with KCNA1, KCNA2, KCNA3 and KCNA4. Interacts (via PDZ domains) with ADGRA3. Interacts with KCNF1. Interacts with CAMK2. Interacts with cytoskeleton-associated protein EPB41. Interacts with cytoskeleton-associated protein EZR. Found in a complex with KCNA5 and CAV3. Found in a complex with APC and CTNNB1. Interacts (via PDZ domains) with APC. Interacts with CDH1 through binding to PIK3R1. Forms multiprotein complexes with CASK, LIN7A, LIN7B, LIN7C, APBA1, and KCNJ12. Interacts with TOPK. Forms a tripartite complex composed of DLG1, MPP7 and LIN7 (LIN7A or LIN7C). May interact with TJAP1. Interacts with PTEN. Interacts with FRMPD4 (via C-terminus). Interacts with LRFN1, LRFN2 and LRFN4. Interacts with SFPQ. Interacts (via PDZ domains) with ADGRA2 (via PDZ-binding motif). Interacts with ADAM10; this interaction recruits ADAM10 to the cell membrane during long-term depression in hippocampal neurons. Interacts with DGKI (via PDZ-binding motif). Interacts (via PDZ domains) with MARCHF2 (via PDZ domain); the interaction leads to DLG1 ubiqtuitination and degradation. Interacts (via N-terminus) with MPP3; this interaction connects CADM1 with DLG1 and links CADM1 with the regulatory subunit of phosphoinositide-3-kinase (PI3K) by forming a multiprotein complex and participates in cell spreading. Phosphorylated by MAPK12. Phosphorylation of Ser-232 regulates association with GRIN2A. In terms of processing, ubiquitinated; by MARCHF2 which results in its degradation.

It is found in the cell membrane. The protein resides in the basolateral cell membrane. The protein localises to the endoplasmic reticulum membrane. Its subcellular location is the postsynaptic density. It localises to the synapse. It is found in the sarcolemma. The protein resides in the apical cell membrane. The protein localises to the cell junction. Its subcellular location is the cytoplasm. Its function is as follows. Essential multidomain scaffolding protein required for normal development. Recruits channels, receptors and signaling molecules to discrete plasma membrane domains in polarized cells. Promotes epithelial cell layer barrier function via maintaining cell-cell adhesion. May also play a role in adherens junction assembly, signal transduction, cell proliferation, synaptogenesis and lymphocyte activation. Regulates the excitability of cardiac myocytes by modulating the functional expression of Kv4 channels. Functional regulator of Kv1.5 channel. During long-term depression in hippocampal neurons, it recruits ADAM10 to the plasma membrane. In Canis lupus familiaris (Dog), this protein is Disks large homolog 1 (DLG1).